The primary structure comprises 221 residues: N-acetyltransferase 8F1 (221 aa).

The helical transmembrane segment at 53-73 (LVLVSGSWLLAVVCIFFLLLL) threads the bilayer. The N-acetyltransferase domain occupies 69-219 (FLLLLLRFLA…RTIQLKYPFP (151 aa)).

This sequence belongs to the camello family.

It is found in the membrane. Functionally, may play a role in regulation of gastrulation. The chain is N-acetyltransferase 8F1 from Rattus norvegicus (Rat).